The following is a 171-amino-acid chain: S-ribosylhomocysteine lyase (171 aa).

Residues histidine 54, histidine 58, and cysteine 128 each coordinate Fe cation.

The protein belongs to the LuxS family. In terms of assembly, homodimer. The cofactor is Fe cation.

The enzyme catalyses S-(5-deoxy-D-ribos-5-yl)-L-homocysteine = (S)-4,5-dihydroxypentane-2,3-dione + L-homocysteine. Involved in the synthesis of autoinducer 2 (AI-2) which is secreted by bacteria and is used to communicate both the cell density and the metabolic potential of the environment. The regulation of gene expression in response to changes in cell density is called quorum sensing. Catalyzes the transformation of S-ribosylhomocysteine (RHC) to homocysteine (HC) and 4,5-dihydroxy-2,3-pentadione (DPD). In Serratia proteamaculans (strain 568), this protein is S-ribosylhomocysteine lyase.